Reading from the N-terminus, the 279-residue chain is S-formylglutathione hydrolase (279 aa).

Residues Ser150, Asp226, and His258 each act as charge relay system in the active site.

The protein belongs to the esterase D family.

The catalysed reaction is S-formylglutathione + H2O = formate + glutathione + H(+). Functionally, serine hydrolase involved in the detoxification of formaldehyde. Hydrolyzes S-formylglutathione to glutathione and formate. The chain is S-formylglutathione hydrolase (fghA) from Paracoccus denitrificans (strain Pd 1222).